The sequence spans 358 residues: Peptide chain release factor 1 (358 aa).

The residue at position 237 (Gln-237) is an N5-methylglutamine.

It belongs to the prokaryotic/mitochondrial release factor family. Methylated by PrmC. Methylation increases the termination efficiency of RF1.

The protein localises to the cytoplasm. Its function is as follows. Peptide chain release factor 1 directs the termination of translation in response to the peptide chain termination codons UAG and UAA. The sequence is that of Peptide chain release factor 1 from Streptomyces coelicolor (strain ATCC BAA-471 / A3(2) / M145).